Here is a 584-residue protein sequence, read N- to C-terminus: Interferon regulatory factor 2-binding protein 1 (584 aa).

The disordered stretch occupies residues 60-127; that stretch reads VLPEGRSPGP…SGRLPLPSPA (68 aa). Ser-66 and Ser-125 each carry phosphoserine. Position 177 is an omega-N-methylarginine (Arg-177). Ser-186 bears the Phosphoserine mark. A coiled-coil region spans residues 197–217; sequence EKEKQQRNADCLAELNEAMRG. Lys-227 is covalently cross-linked (Glycyl lysine isopeptide (Lys-Gly) (interchain with G-Cter in SUMO2)). The segment at 346 to 420 is disordered; that stretch reads PAEALPQQYP…PYSAETPGVP (75 aa). Over residues 354–369 the composition is skewed to pro residues; it reads YPEPAPAALCGPPPRA. Residues Ser-371, Ser-384, Ser-421, and Ser-436 each carry the phosphoserine modification. A disordered region spans residues 433–495; the sequence is LGHSPKDPGG…VSGGGSGTGA (63 aa). Residue Lys-438 forms a Glycyl lysine isopeptide (Lys-Gly) (interchain with G-Cter in SUMO2) linkage. Residues 449–463 are compositionally biased toward low complexity; the sequence is AGGASPAASSTAQPP. Residues Ser-453 and Ser-457 each carry the phosphoserine modification. The segment at 503–550 adopts an RING-type; degenerate zinc-finger fold; sequence CTLCRERLEDTHFVQCPSVPGHKFCFPCSREFIKAQGPAGEVYCPSGD. The interval 503–550 is cys-rich; that stretch reads CTLCRERLEDTHFVQCPSVPGHKFCFPCSREFIKAQGPAGEVYCPSGD.

It belongs to the IRF2BP family. In terms of assembly, interacts with IRF2. Part of a corepressor complex containing IRF2 and IRF2BP2. Interacts with JDP2.

Its subcellular location is the nucleus. It carries out the reaction S-ubiquitinyl-[E2 ubiquitin-conjugating enzyme]-L-cysteine + [acceptor protein]-L-lysine = [E2 ubiquitin-conjugating enzyme]-L-cysteine + N(6)-ubiquitinyl-[acceptor protein]-L-lysine.. Acts as a transcriptional corepressor in a IRF2-dependent manner; this repression is not mediated by histone deacetylase activities. May act as an E3 ligase towards JDP2, enhancing its polyubiquitination. Represses ATF2-dependent transcriptional activation. The protein is Interferon regulatory factor 2-binding protein 1 (IRF2BP1) of Homo sapiens (Human).